Here is a 429-residue protein sequence, read N- to C-terminus: Serine hydroxymethyltransferase (429 aa).

120–122 (GHI) is a (6S)-5,6,7,8-tetrahydrofolate binding site. Residue Lys-226 is modified to N6-(pyridoxal phosphate)lysine.

The protein belongs to the SHMT family. In terms of assembly, homodimer. Requires pyridoxal 5'-phosphate as cofactor.

The protein resides in the cytoplasm. The protein operates within amino-acid biosynthesis; glycine biosynthesis; glycine from L-serine: step 1/1. Functionally, catalyzes the reversible interconversion of serine and glycine with a modified folate serving as the one-carbon carrier. Also exhibits a pteridine-independent aldolase activity toward beta-hydroxyamino acids, producing glycine and aldehydes, via a retro-aldol mechanism. In Pyrobaculum arsenaticum (strain DSM 13514 / JCM 11321 / PZ6), this protein is Serine hydroxymethyltransferase.